The following is a 443-amino-acid chain: ATP-dependent protease ATPase subunit HslU (443 aa).

Residues Ile-18, 60–65 (GVGKTE), Asp-256, Glu-321, and Arg-393 each bind ATP.

This sequence belongs to the ClpX chaperone family. HslU subfamily. A double ring-shaped homohexamer of HslV is capped on each side by a ring-shaped HslU homohexamer. The assembly of the HslU/HslV complex is dependent on binding of ATP.

Its subcellular location is the cytoplasm. ATPase subunit of a proteasome-like degradation complex; this subunit has chaperone activity. The binding of ATP and its subsequent hydrolysis by HslU are essential for unfolding of protein substrates subsequently hydrolyzed by HslV. HslU recognizes the N-terminal part of its protein substrates and unfolds these before they are guided to HslV for hydrolysis. This Buchnera aphidicola subsp. Acyrthosiphon pisum (strain APS) (Acyrthosiphon pisum symbiotic bacterium) protein is ATP-dependent protease ATPase subunit HslU.